Consider the following 271-residue polypeptide: Phosphate import ATP-binding protein PstB 2 (271 aa).

The 242-residue stretch at 25–266 (MATEDLHVYY…PQEKQTEDYI (242 aa)) folds into the ABC transporter domain. 57–64 (GPSGCGKS) is an ATP binding site.

This sequence belongs to the ABC transporter superfamily. Phosphate importer (TC 3.A.1.7) family. The complex is composed of two ATP-binding proteins (PstB), two transmembrane proteins (PstC and PstA) and a solute-binding protein (PstS).

It localises to the cell membrane. The enzyme catalyses phosphate(out) + ATP + H2O = ADP + 2 phosphate(in) + H(+). Its function is as follows. Part of the ABC transporter complex PstSACB involved in phosphate import. Responsible for energy coupling to the transport system. This Listeria monocytogenes serovar 1/2a (strain ATCC BAA-679 / EGD-e) protein is Phosphate import ATP-binding protein PstB 2.